Consider the following 89-residue polypeptide: Small ribosomal subunit protein uS15 (89 aa).

It belongs to the universal ribosomal protein uS15 family. Part of the 30S ribosomal subunit. Forms a bridge to the 50S subunit in the 70S ribosome, contacting the 23S rRNA.

One of the primary rRNA binding proteins, it binds directly to 16S rRNA where it helps nucleate assembly of the platform of the 30S subunit by binding and bridging several RNA helices of the 16S rRNA. In terms of biological role, forms an intersubunit bridge (bridge B4) with the 23S rRNA of the 50S subunit in the ribosome. The protein is Small ribosomal subunit protein uS15 of Geobacillus thermodenitrificans (strain NG80-2).